Consider the following 172-residue polypeptide: 3-hydroxydecanoyl-[acyl-carrier-protein] dehydratase (172 aa).

The active site involves His71.

This sequence belongs to the thioester dehydratase family. FabA subfamily. As to quaternary structure, homodimer.

It localises to the cytoplasm. The enzyme catalyses a (3R)-hydroxyacyl-[ACP] = a (2E)-enoyl-[ACP] + H2O. It catalyses the reaction (3R)-hydroxydecanoyl-[ACP] = (2E)-decenoyl-[ACP] + H2O. It carries out the reaction (2E)-decenoyl-[ACP] = (3Z)-decenoyl-[ACP]. It functions in the pathway lipid metabolism; fatty acid biosynthesis. Necessary for the introduction of cis unsaturation into fatty acids. Catalyzes the dehydration of (3R)-3-hydroxydecanoyl-ACP to E-(2)-decenoyl-ACP and then its isomerization to Z-(3)-decenoyl-ACP. Can catalyze the dehydratase reaction for beta-hydroxyacyl-ACPs with saturated chain lengths up to 16:0, being most active on intermediate chain length. This Vibrio parahaemolyticus serotype O3:K6 (strain RIMD 2210633) protein is 3-hydroxydecanoyl-[acyl-carrier-protein] dehydratase.